Reading from the N-terminus, the 546-residue chain is Interleukin-20 receptor subunit alpha (546 aa).

A signal peptide spans 1–32 (MHTPGTPAPGHPDPPPLLLLTLLLLLAASGRA). Over 33 to 253 (VPCVFCGLPK…EVQTSAWKAK (221 aa)) the chain is Extracellular. Fibronectin type-III domains follow at residues 42–138 (KPTN…FLET) and 139–245 (QVSP…TLEV). N-linked (GlcNAc...) asparagine glycosylation is found at Asn-45, Asn-86, Asn-94, Asn-185, and Asn-203. A disulfide bond links Cys-90 and Cys-98. A disulfide bridge links Cys-218 with Cys-239. Residues 254-274 (VIFWYVFLTSVIVFLFSAIGY) form a helical membrane-spanning segment. At 275–546 (LVYRYIHVGK…EWGLHVQMES (272 aa)) the chain is on the cytoplasmic side.

The protein belongs to the type II cytokine receptor family. As to quaternary structure, heterodimer with IL20RB and heterodimer with IL10RB.

It is found in the membrane. In terms of biological role, the IL20RA/IL20RB dimer is a receptor for IL19, IL20 and IL24. The IL20RA/IL10RB dimer is a receptor for IL26. The polypeptide is Interleukin-20 receptor subunit alpha (Il20ra) (Mus musculus (Mouse)).